A 356-amino-acid polypeptide reads, in one-letter code: sn-glycerol-3-phosphate import ATP-binding protein UgpC (356 aa).

An ABC transporter domain is found at 4 to 235; that stretch reads LKLQAVTKSW…PASLFVASFI (232 aa). Residue 37-44 coordinates ATP; it reads GPSGCGKS.

Belongs to the ABC transporter superfamily. sn-glycerol-3-phosphate importer (TC 3.A.1.1.3) family. The complex is composed of two ATP-binding proteins (UgpC), two transmembrane proteins (UgpA and UgpE) and a solute-binding protein (UgpB).

It is found in the cell inner membrane. It catalyses the reaction sn-glycerol 3-phosphate(out) + ATP + H2O = sn-glycerol 3-phosphate(in) + ADP + phosphate + H(+). Part of the ABC transporter complex UgpBAEC involved in sn-glycerol-3-phosphate (G3P) import. Responsible for energy coupling to the transport system. This is sn-glycerol-3-phosphate import ATP-binding protein UgpC from Shigella boydii serotype 4 (strain Sb227).